The primary structure comprises 340 residues: L-threonine 3-dehydrogenase (340 aa).

Cys38 contributes to the Zn(2+) binding site. Catalysis depends on charge relay system residues Thr40 and His43. Residues His63, Glu64, Cys93, Cys96, Cys99, and Cys107 each coordinate Zn(2+). NAD(+)-binding positions include Ile175, Asp195, Arg200, 261-263, and 285-286; these read LGI and IY.

The protein belongs to the zinc-containing alcohol dehydrogenase family. Homotetramer. Zn(2+) serves as cofactor.

Its subcellular location is the cytoplasm. It carries out the reaction L-threonine + NAD(+) = (2S)-2-amino-3-oxobutanoate + NADH + H(+). The protein operates within amino-acid degradation; L-threonine degradation via oxydo-reductase pathway; glycine from L-threonine: step 1/2. Functionally, catalyzes the NAD(+)-dependent oxidation of L-threonine to 2-amino-3-ketobutyrate. This is L-threonine 3-dehydrogenase from Xanthomonas euvesicatoria pv. vesicatoria (strain 85-10) (Xanthomonas campestris pv. vesicatoria).